The primary structure comprises 208 residues: Urease accessory protein UreE (208 aa).

The tract at residues 145-165 (EGGAYSAGGHGHTHAPAATPV) is disordered.

Belongs to the UreE family.

The protein localises to the cytoplasm. Involved in urease metallocenter assembly. Binds nickel. Probably functions as a nickel donor during metallocenter assembly. The protein is Urease accessory protein UreE of Polaromonas naphthalenivorans (strain CJ2).